Here is a 525-residue protein sequence, read N- to C-terminus: Cysteine--tRNA ligase (525 aa).

Position 49 (cysteine 49) interacts with Zn(2+). Residues 51 to 61 (VTVYDLCHLGH) carry the 'HIGH' region motif. The Zn(2+) site is built by cysteine 258, histidine 283, and glutamate 287. Positions 315–319 (KMSKS) match the 'KMSKS' region motif. Lysine 318 serves as a coordination point for ATP.

Belongs to the class-I aminoacyl-tRNA synthetase family. In terms of assembly, monomer. Zn(2+) is required as a cofactor.

It localises to the cytoplasm. It catalyses the reaction tRNA(Cys) + L-cysteine + ATP = L-cysteinyl-tRNA(Cys) + AMP + diphosphate. The polypeptide is Cysteine--tRNA ligase (Synechococcus sp. (strain JA-2-3B'a(2-13)) (Cyanobacteria bacterium Yellowstone B-Prime)).